Consider the following 371-residue polypeptide: MKFELIANDGAARRGRLSFPRGTVETPAFMPVGTYGTVKAMTPEELEGIGAEIILGNTFHLMLRPGTEVIQLHGDLHDFMHWEKPILTDSGGFQVFSLADLRKITEEGVKFRSPVDGSEILLTPERSMDVQRALGSDIVMIFDECTPYPATEDQARESMELSLRWAARSKVAHGDSPSALFGIVQGGMYPALRSRSLEGLVDVGFDGYAIGGLSVGEGMEERHHVLDHLMPEMPAERPRYLMGVGKPEDIVEAVRRGVDMFDCVIPTRNARNGFLYTREGVMRIRNSRFRTDTGPIDESCDCYTCRNYSRAYLKHLDKCNEILGARLNTIHNLHYYQTLMRELRGAIAEGRLEAWVAEFYGRRSQAVPSVP.

The active-site Proton acceptor is the aspartate 89. Residues 89–93, aspartate 143, glutamine 185, and glycine 212 contribute to the substrate site; that span reads DSGGF. The interval 243–249 is RNA binding; the sequence is GVGKPED. Aspartate 262 functions as the Nucleophile in the catalytic mechanism. Residues 267 to 271 form an RNA binding; important for wobble base 34 recognition region; the sequence is TRNAR. The Zn(2+) site is built by cysteine 300, cysteine 302, cysteine 305, and histidine 331.

The protein belongs to the queuine tRNA-ribosyltransferase family. In terms of assembly, homodimer. Within each dimer, one monomer is responsible for RNA recognition and catalysis, while the other monomer binds to the replacement base PreQ1. Requires Zn(2+) as cofactor.

The enzyme catalyses 7-aminomethyl-7-carbaguanine + guanosine(34) in tRNA = 7-aminomethyl-7-carbaguanosine(34) in tRNA + guanine. It functions in the pathway tRNA modification; tRNA-queuosine biosynthesis. In terms of biological role, catalyzes the base-exchange of a guanine (G) residue with the queuine precursor 7-aminomethyl-7-deazaguanine (PreQ1) at position 34 (anticodon wobble position) in tRNAs with GU(N) anticodons (tRNA-Asp, -Asn, -His and -Tyr). Catalysis occurs through a double-displacement mechanism. The nucleophile active site attacks the C1' of nucleotide 34 to detach the guanine base from the RNA, forming a covalent enzyme-RNA intermediate. The proton acceptor active site deprotonates the incoming PreQ1, allowing a nucleophilic attack on the C1' of the ribose to form the product. After dissociation, two additional enzymatic reactions on the tRNA convert PreQ1 to queuine (Q), resulting in the hypermodified nucleoside queuosine (7-(((4,5-cis-dihydroxy-2-cyclopenten-1-yl)amino)methyl)-7-deazaguanosine). This Thioalkalivibrio sulfidiphilus (strain HL-EbGR7) protein is Queuine tRNA-ribosyltransferase.